A 257-amino-acid polypeptide reads, in one-letter code: Diaminopimelate epimerase (257 aa).

Residues Asn-13, Gln-46, and Asn-66 each contribute to the substrate site. Cys-75 acts as the Proton donor in catalysis. Residues 76 to 77 (GN), Asn-145, Asn-175, and 193 to 194 (ER) contribute to the substrate site. The active-site Proton acceptor is the Cys-202. 203-204 (GS) is a binding site for substrate.

The protein belongs to the diaminopimelate epimerase family. As to quaternary structure, homodimer.

It is found in the cytoplasm. The catalysed reaction is (2S,6S)-2,6-diaminopimelate = meso-2,6-diaminopimelate. The protein operates within amino-acid biosynthesis; L-lysine biosynthesis via DAP pathway; DL-2,6-diaminopimelate from LL-2,6-diaminopimelate: step 1/1. Its function is as follows. Catalyzes the stereoinversion of LL-2,6-diaminopimelate (L,L-DAP) to meso-diaminopimelate (meso-DAP), a precursor of L-lysine and an essential component of the bacterial peptidoglycan. The protein is Diaminopimelate epimerase of Gluconobacter oxydans (strain 621H) (Gluconobacter suboxydans).